Consider the following 237-residue polypeptide: Placenta-expressed transcript 1 protein (237 aa).

An N-terminal signal peptide occupies residues 1–27 (MLSLRSLLPHLGLFLCLALHLSPSLSA). Residues Asn-30, Asn-67, Asn-103, and Asn-136 are each glycosylated (N-linked (GlcNAc...) asparagine). Polar residues predominate over residues 145 to 162 (KMEQVQPSASTPIPESSE). Residues 145-170 (KMEQVQPSASTPIPESSETSQTINTT) form a disordered region. A lipid anchor (GPI-anchor amidated serine) is attached at Ser-218. A propeptide spans 219 to 237 (PLAGALHILLVFLISKLLF) (removed in mature form).

N-glycosylated. In terms of processing, GPI-anchored. Present in hair follicle cells and sebaceous gland of skin, ciliated epithelial cells of trachea and bronchial tube, striated portion of submandibular gland, distal convoluted tubule cells of kidney, ciliated epithelial cells of oviduct, medulla of adrenal gland and anterior lobe of pituitary gland. Expressed in keratinocytes of the hair follicle at the trichilemmal zone corresponding to the terminally differentiated outermost suprabasal outer root sheath (ORS), including that of the sebaceous gland duct (SGD) and the directly adjacent upper distal end of the companion layer (CL). Expression is similar in all hair follicle growth stages. Also detected during both the early and late anagen phases above the bulge of stem cells. Expressed at the leading edge of the epidermal wound. Not expressed in the interfollicular epidermis (IFE), inner root sheath (IRS) and hair fiber. Highly expressed in placenta. Detected in mammary and prostate epithelia and in the pancreas (at protein level).

It localises to the apical cell membrane. Its function is as follows. Modulates leading keratinocyte migration and cellular adhesion to matrix proteins during a wound-healing response and promotes wound repair. May play a role during trichilemmal differentiation of the hair follicle. In Mus musculus (Mouse), this protein is Placenta-expressed transcript 1 protein (Plet1).